The primary structure comprises 229 residues: Large ribosomal subunit protein uL1 (229 aa).

This sequence belongs to the universal ribosomal protein uL1 family. As to quaternary structure, part of the 50S ribosomal subunit.

In terms of biological role, binds directly to 23S rRNA. The L1 stalk is quite mobile in the ribosome, and is involved in E site tRNA release. Protein L1 is also a translational repressor protein, it controls the translation of the L11 operon by binding to its mRNA. The sequence is that of Large ribosomal subunit protein uL1 from Streptococcus thermophilus (strain CNRZ 1066).